A 315-amino-acid polypeptide reads, in one-letter code: Malate dehydrogenase (315 aa).

NAD(+)-binding positions include 10 to 15 and Asp34; that span reads GSGFTG. Substrate contacts are provided by Arg85 and Arg91. NAD(+) contacts are provided by residues Asn98 and 121–123; that span reads LTN. Residues Asn123 and Arg154 each contribute to the substrate site. His178 serves as the catalytic Proton acceptor.

It belongs to the LDH/MDH superfamily. MDH type 3 family.

It catalyses the reaction (S)-malate + NAD(+) = oxaloacetate + NADH + H(+). Its function is as follows. Catalyzes the reversible oxidation of malate to oxaloacetate. The polypeptide is Malate dehydrogenase (Symbiobacterium thermophilum (strain DSM 24528 / JCM 14929 / IAM 14863 / T)).